A 207-amino-acid chain; its full sequence is MAAVDVLNRSGEKVSEAFLADEVFSIPVKKSVLHDVVRMQLARRRSGTAKSKGRSEVSGSTRKLYRQKGTGNARSGSVKSPLRRGGGVIFGPAPRSYAYAIPKKVRALALKMALSSKLAANELSVIDTFAMDSIKTKEFDSIIDHLGLKNTLIVIDGDDRNLVLSARNIPDVKVIRTEGLNVYDILKYDNLLLIESAIKEIEGRFTR.

The interval 43 to 80 (RRRSGTAKSKGRSEVSGSTRKLYRQKGTGNARSGSVKS) is disordered. The segment covering 69 to 78 (GTGNARSGSV) has biased composition (polar residues).

The protein belongs to the universal ribosomal protein uL4 family. In terms of assembly, part of the 50S ribosomal subunit.

One of the primary rRNA binding proteins, this protein initially binds near the 5'-end of the 23S rRNA. It is important during the early stages of 50S assembly. It makes multiple contacts with different domains of the 23S rRNA in the assembled 50S subunit and ribosome. Its function is as follows. Forms part of the polypeptide exit tunnel. The protein is Large ribosomal subunit protein uL4 of Desulforapulum autotrophicum (strain ATCC 43914 / DSM 3382 / VKM B-1955 / HRM2) (Desulfobacterium autotrophicum).